The primary structure comprises 205 residues: Cytochrome c oxidase subunit 3 (205 aa).

The next 5 membrane-spanning stretches (helical) occupy residues 29 to 49, 72 to 92, 104 to 124, 142 to 162, and 184 to 204; these read TIVF…MYFV, ALLI…GVFA, WFLV…YEYI, FFIT…AFVV, and SYYW…IYFI.

Associates with subunits I, II and IV to form cytochrome c oxidase. The 4 subunit cytochrome c oxidase forms a supercomplex with the menaquinol-cytochrome c reductase complex (cytochrome bc1).

The protein resides in the cell membrane. It carries out the reaction 4 Fe(II)-[cytochrome c] + O2 + 8 H(+)(in) = 4 Fe(III)-[cytochrome c] + 2 H2O + 4 H(+)(out). The protein is Cytochrome c oxidase subunit 3 (ctaE) of Corynebacterium glutamicum (strain ATCC 13032 / DSM 20300 / JCM 1318 / BCRC 11384 / CCUG 27702 / LMG 3730 / NBRC 12168 / NCIMB 10025 / NRRL B-2784 / 534).